The primary structure comprises 397 residues: Geranylgeranyl pyrophosphate synthase AN1592 (397 aa).

A disordered region spans residues 1-67 (MSPPLDSALE…SHDSSASSNI (67 aa)). Residues 13–42 (SEYKETAFPRTEKDPSQYKEHDLVTPEKEI) are compositionally biased toward basic and acidic residues. The segment covering 52–67 (SHSSHGSHDSSASSNI) has biased composition (low complexity). Isopentenyl diphosphate contacts are provided by K120, R123, and H152. Mg(2+) contacts are provided by D159 and D163. R168 provides a ligand contact to dimethylallyl diphosphate. Residue R169 participates in isopentenyl diphosphate binding. 3 residues coordinate dimethylallyl diphosphate: K247, T248, and Q281. Residue D284 participates in Mg(2+) binding. Residues N288, K298, and K308 each coordinate dimethylallyl diphosphate.

Belongs to the FPP/GGPP synthase family. Mg(2+) is required as a cofactor.

The catalysed reaction is isopentenyl diphosphate + dimethylallyl diphosphate = (2E)-geranyl diphosphate + diphosphate. The enzyme catalyses isopentenyl diphosphate + (2E)-geranyl diphosphate = (2E,6E)-farnesyl diphosphate + diphosphate. It catalyses the reaction isopentenyl diphosphate + (2E,6E)-farnesyl diphosphate = (2E,6E,10E)-geranylgeranyl diphosphate + diphosphate. Its pathway is secondary metabolite biosynthesis; terpenoid biosynthesis. Geranylgeranyl pyrophosphate synthase; part of the gene cluster that mediates the biosynthesis of the diterpene ent-pimara-8(14),15-diene (PD). Within the cluster, the HMG-CoA reductase AN1593 functions in the mevalonate pathway, which produces isoprenoid precursors. The geranylgeranyl pyrophosphate (GGPP) synthase AN1592 is needed in the formation of GGPP, the precursor for diterpenes. Lastly, the pimaradiene synthase pbcA performs the 2 cyclization steps that convert GGPP to ent-pimara-8(14),15-diene. The putative roles of the remaining cluster enzymes in ent-pimara-8(14),15-diene biosynthesis is unclear. The cytochrome P450 monooxygenase AN1598, the glutathione S-transferase AN1595, the oxidoreductases AN1596 and AN1597 probably function as decorative enzymes. It is possible that in biological conditions the compound is oxidized to ent-pimara-8(14),15-dien-19-oic acid, which is a bioactive diterpene compound predominant in many plant extracts. The chain is Geranylgeranyl pyrophosphate synthase AN1592 from Emericella nidulans (strain FGSC A4 / ATCC 38163 / CBS 112.46 / NRRL 194 / M139) (Aspergillus nidulans).